We begin with the raw amino-acid sequence, 385 residues long: F-box only protein 4 (385 aa).

Residues serine 11 and serine 46 each carry the phosphoserine modification. One can recognise an F-box domain in the interval threonine 54–phenylalanine 100.

Homodimer. Part of the SCF (SKP1-CUL1-F-box) E3 ubiquitin-protein ligase complex SCF(FBXO4) formed of CUL1, SKP1, RBX1 and FBXO4. Interacts with TERF1; this interaction is prevented in the presence of GNL3L. Identified in a complex with CRYAB and CCND1. Phosphorylation at Ser-11 varies during the cell cycle. It is low in resting cells and high in the S phase and the G2/M phase of the cell cycle. Phosphorylation is decreased during late G1 phase. Phosphorylation at Ser-11 is important for homodimerization and for optimal ubiquitin ligase activity towards CCND1.

It is found in the cytoplasm. It participates in protein modification; protein ubiquitination. Functionally, substrate recognition component of a SCF (SKP1-CUL1-F-box protein) E3 ubiquitin-protein ligase complex that mediates the ubiquitination and subsequent proteasomal degradation of target proteins. Promotes ubiquitination of cyclin-D1 (CCND1) and its subsequent proteasomal degradation. However, it does not act as a major regulator of CCND1 stability during the G1/S transition. Recognizes TERF1 and promotes its ubiquitination together with UBE2D1. Promotes ubiquitination of FXR1 following phosphorylation of FXR1 by GSK3B, leading to FXR1 degradation by the proteasome. The polypeptide is F-box only protein 4 (Mus musculus (Mouse)).